The following is a 187-amino-acid chain: MRQAKTDLAEQIFSATDRLMAREGLNQLSMLKLAKEANVAAGTIYLYFKNKDELLEQFAHRVFSMFMATLEKDFDETKPFFEQYRQMWKNIWYFLQENPTILSNLKQYESLPNFKDICKNIKNCRWDLFCHQAQKAGLLAELSEDILFLLSLKTAINLASDAKFIDFDLKPEILESVIERSWRAIQK.

Positions 6 to 66 constitute an HTH tetR-type domain; sequence TDLAEQIFSA…QFAHRVFSMF (61 aa). Residues 29 to 48 constitute a DNA-binding region (H-T-H motif); sequence SMLKLAKEANVAAGTIYLYF.

This is an uncharacterized protein from Haemophilus influenzae (strain ATCC 51907 / DSM 11121 / KW20 / Rd).